Reading from the N-terminus, the 91-residue chain is UPF0250 protein Pfl01_4965 (91 aa).

This sequence belongs to the UPF0250 family.

The protein is UPF0250 protein Pfl01_4965 of Pseudomonas fluorescens (strain Pf0-1).